Here is a 555-residue protein sequence, read N- to C-terminus: Serine/threonine-protein kinase Nek4 (555 aa).

The Protein kinase domain maps to Tyr-4–Leu-258. ATP-binding positions include Ile-10–Ala-18 and Lys-33. Asp-129 functions as the Proton acceptor in the catalytic mechanism. 3 disordered regions span residues Leu-288 to Gly-328, Gln-346 to Thr-372, and Asn-443 to Asp-477. Polar residues predominate over residues Pro-304–Ala-320.

Belongs to the protein kinase superfamily. NEK Ser/Thr protein kinase family. NIMA subfamily.

It carries out the reaction L-seryl-[protein] + ATP = O-phospho-L-seryl-[protein] + ADP + H(+). It catalyses the reaction L-threonyl-[protein] + ATP = O-phospho-L-threonyl-[protein] + ADP + H(+). In terms of biological role, may be involved in plant development processes. This chain is Serine/threonine-protein kinase Nek4 (NEK4), found in Arabidopsis thaliana (Mouse-ear cress).